A 103-amino-acid chain; its full sequence is MYAVFQSGGKQHRVSEGQVVRLEKLELATGATVEFDSVLMVVNGEDVKIGAPVVAGAKVVAEVVAQGRGEKVKIVKFRRRKHSRKQQGHRQWFTEVKITGIQA.

This sequence belongs to the bacterial ribosomal protein bL21 family. As to quaternary structure, part of the 50S ribosomal subunit. Contacts protein L20.

Functionally, this protein binds to 23S rRNA in the presence of protein L20. This chain is Large ribosomal subunit protein bL21, found in Haemophilus influenzae (strain PittEE).